Consider the following 388-residue polypeptide: 8-amino-7-oxononanoate synthase (388 aa).

Residue R23 participates in substrate binding. 110–111 (GF) lines the pyridoxal 5'-phosphate pocket. H135 lines the substrate pocket. Pyridoxal 5'-phosphate is bound by residues S181, H209, and T235. K238 bears the N6-(pyridoxal phosphate)lysine mark. Substrate is bound at residue T352.

Belongs to the class-II pyridoxal-phosphate-dependent aminotransferase family. BioF subfamily. In terms of assembly, homodimer. Pyridoxal 5'-phosphate serves as cofactor.

The catalysed reaction is 6-carboxyhexanoyl-[ACP] + L-alanine + H(+) = (8S)-8-amino-7-oxononanoate + holo-[ACP] + CO2. It functions in the pathway cofactor biosynthesis; biotin biosynthesis. Catalyzes the decarboxylative condensation of pimeloyl-[acyl-carrier protein] and L-alanine to produce 8-amino-7-oxononanoate (AON), [acyl-carrier protein], and carbon dioxide. This is 8-amino-7-oxononanoate synthase from Sodalis glossinidius (strain morsitans).